A 674-amino-acid polypeptide reads, in one-letter code: Methionine--tRNA ligase (674 aa).

The 'HIGH' region motif lies at 11–21 (PYANGDLHLGH). The Zn(2+) site is built by cysteine 142, cysteine 145, cysteine 155, and cysteine 158. The 'KMSKS' region motif lies at 330-334 (KMSKS). Lysine 333 provides a ligand contact to ATP. One can recognise a tRNA-binding domain in the interval 574–674 (DFMKVDLRIA…EGAQPGMRVK (101 aa)).

The protein belongs to the class-I aminoacyl-tRNA synthetase family. MetG type 1 subfamily. Homodimer. It depends on Zn(2+) as a cofactor.

It is found in the cytoplasm. It carries out the reaction tRNA(Met) + L-methionine + ATP = L-methionyl-tRNA(Met) + AMP + diphosphate. Its function is as follows. Is required not only for elongation of protein synthesis but also for the initiation of all mRNA translation through initiator tRNA(fMet) aminoacylation. The sequence is that of Methionine--tRNA ligase from Francisella tularensis subsp. tularensis (strain FSC 198).